We begin with the raw amino-acid sequence, 317 residues long: R-phycoerythrin gamma chain, chloroplastic (317 aa).

A chloroplast-targeting transit peptide spans 1-40; the sequence is MASPAFAVNGMFTPVKLSGSFTASMPVDSKPAASATGVRM. Phycourobilin-binding residues include Cys94 and Cys133. (2R,3E)-phycoerythrobilin is bound at residue Cys210. A phycourobilin-binding site is contributed by Cys297.

In terms of assembly, heteromer of 1 alpha, 1 beta and 2 gamma chains. Contains four covalently linked bilin chromophores.

The protein resides in the plastid. The protein localises to the chloroplast thylakoid membrane. Critical for the incorporation of phycoerythrin in the phycobilisome complex. In Aglaothamnion neglectum (Red alga), this protein is R-phycoerythrin gamma chain, chloroplastic.